The following is a 418-amino-acid chain: MKIKDFNIECDNLKIEENEFSKGSFAKVYKGSYYGNPVCVKVIKKDTLIDKESWVFLKREIGILKNLLNQGHKNIIRFIGIGEKDSLLFLVTELINGGDLGNILLDHKFHIPWSLRVKIAKDIAEGMEYLHSKQIMHRDLKSNNLLLGRNWTIKICDFGFAKEITIQNPLSMTICGTDEFMSPEVILGIQYSYSADIYSFGMVLLELITRSKLDERLPQNNFDIDYEELQNKIPSECPREFLELSMKCCNYDPNDRPSFTDIVQTLDQLAIKLVKETPDGPYPSTPIVVSNPHFDDQSINDWCMLSLIPDDCLENLNEFAEIENNINNNNNNNNNNNNKNNINNNNNNNNNNNNNNNNNNNCKVICENCASPQSTSSVNSSFSNSSLGSNGSNSSGTSTSSGGKKRSQKRKSWKCLIN.

The region spanning 14–271 is the Protein kinase domain; it reads KIEENEFSKG…IVQTLDQLAI (258 aa). Residues 20 to 28 and K41 contribute to the ATP site; that span reads FSKGSFAKV. Residue D139 is the Proton acceptor of the active site. Disordered regions lie at residues 327–356 and 377–418; these read NNNN…NNNN and SVNS…CLIN. Residues 377-402 are compositionally biased toward low complexity; sequence SVNSSFSNSSLGSNGSNSSGTSTSSG. Over residues 403 to 418 the composition is skewed to basic residues; it reads GKKRSQKRKSWKCLIN.

It belongs to the protein kinase superfamily. TKL Ser/Thr protein kinase family.

The enzyme catalyses L-seryl-[protein] + ATP = O-phospho-L-seryl-[protein] + ADP + H(+). It carries out the reaction L-threonyl-[protein] + ATP = O-phospho-L-threonyl-[protein] + ADP + H(+). In Dictyostelium discoideum (Social amoeba), this protein is Probable serine/threonine-protein kinase DDB_G0280461.